Consider the following 340-residue polypeptide: Serine/threonine-protein kinase PDIK1L (340 aa).

A Protein kinase domain is found at 8-333; it reads YDLIREVGRG…LELRLVQIAF (326 aa). Residues 14 to 22 and Lys37 contribute to the ATP site; that span reads VGRGSYGVV. The active-site Proton acceptor is Asp164.

This sequence belongs to the protein kinase superfamily. Ser/Thr protein kinase family.

The protein localises to the nucleus. The catalysed reaction is L-seryl-[protein] + ATP = O-phospho-L-seryl-[protein] + ADP + H(+). It carries out the reaction L-threonyl-[protein] + ATP = O-phospho-L-threonyl-[protein] + ADP + H(+). This is Serine/threonine-protein kinase PDIK1L (PDIK1L) from Pongo abelii (Sumatran orangutan).